Consider the following 76-residue polypeptide: Neuromacin-like protein (76 aa).

4 disulfides stabilise this stretch: Cys18-Cys25, Cys40-Cys44, Cys54-Cys61, and Cys72-Cys74.

The protein belongs to the macin family.

It localises to the secreted. This is Neuromacin-like protein from Aplysia californica (California sea hare).